The following is a 798-amino-acid chain: MPRVPATLYACLLGLCALVPRLAGLNICTSGSATSCEECLLIHPKCAWCSKEYFGNPRSITSRCDLKANLIRNGCEGEIESPASSTHVLRNLPLSSKGSSATGSDVIQMTPQEIAVSLRPGEQTTFQLQVRQVEDYPVDLYYLMDLSLSMKDDLENIRSLGTKLAEEMRKLTSNFRLGFGSFVDKDISPFSYTAPRYQTNPCIGYKLFPNCVPSFGFRHLLPLTDRVDSFNEEVRKQRVSRNRDAPEGGFDAVLQAAVCKEKIGWRKDALHLLVFTTDDVPHIALDGKLGGLVQPHDGQCHLNEANEYTASNQMDYPSLALLGEKLAENNINLIFAVTKNHYMLYKNFTALIPGTTVEILHGDSKNIIQLIINAYSSIRAKVELSVWDQPEDLNLFFTATCQDGISYPGQRKCEGLKIGDTASFEVSVEARSCPGRQAAQSFTLRPVGFRDSLQVEVAYNCTCGCSTGLEPNSARCSGNGTYTCGLCECDPGYLGTRCECQEGENQSGYQNLCREAEGKPLCSGRGECSCNQCSCFESEFGRIYGPFCECDSFSCARNKGVLCSGHGECHCGECKCHAGYIGDNCNCSTDVSTCKAKDGQICSDRGRCVCGQCQCTEPGAFGETCEKCPTCPDACSSKRDCVECLLLHQGKPDNQTCHHQCKDEVITWVDTIVKDDQEAVLCFYKTAKDCVMMFSYTELPNGRSNLTVLREPECGSAPNAMTILLAVVGSILLIGMALLAIWKLLVTIHDRREFAKFQSERSRARYEMASNPLYRKPISTHTVDFAFNKFNKSYNGSV.

The signal sequence occupies residues 1-23 (MPRVPATLYACLLGLCALVPRLA). The Extracellular segment spans residues 24–719 (GLNICTSGSA…REPECGSAPN (696 aa)). The PSI domain maps to 27 to 76 (ICTSGSATSCEECLLIHPKCAWCSKEYFGNPRSITSRCDLKANLIRNGCE). 19 disulfides stabilise this stretch: cysteine 28–cysteine 46, cysteine 36–cysteine 463, cysteine 39–cysteine 64, cysteine 49–cysteine 75, cysteine 202–cysteine 211, cysteine 259–cysteine 300, cysteine 401–cysteine 413, cysteine 433–cysteine 461, cysteine 465–cysteine 484, cysteine 476–cysteine 487, cysteine 489–cysteine 498, cysteine 500–cysteine 530, cysteine 513–cysteine 528, cysteine 522–cysteine 533, cysteine 535–cysteine 548, cysteine 550–cysteine 571, cysteine 555–cysteine 569, cysteine 563–cysteine 574, and cysteine 576–cysteine 585. The VWFA domain occupies 136 to 378 (YPVDLYYLMD…QLIINAYSSI (243 aa)). Mg(2+) contacts are provided by serine 147 and serine 149. Ca(2+) contacts are provided by serine 149, aspartate 152, aspartate 153, and aspartate 184. Residues asparagine 242, aspartate 244, proline 246, and glutamate 247 each coordinate Ca(2+). Residue glutamate 247 participates in Mg(2+) binding. Asparagine 347 carries N-linked (GlcNAc...) asparagine glycosylation. Ca(2+) is bound at residue glycine 362. N-linked (GlcNAc...) asparagine glycosylation is found at asparagine 460 and asparagine 479. I-EGF domains lie at 465 to 499 (CSTG…TRCE), 500 to 549 (CQEG…PFCE), 550 to 586 (CDSF…DNCN), and 587 to 626 (CSTD…ETCE). N-linked (GlcNAc...) asparagine glycosylation is present at asparagine 505. N-linked (GlcNAc...) asparagine glycosylation is present at asparagine 586. Intrachain disulfides connect cysteine 587/cysteine 610, cysteine 594/cysteine 608, cysteine 602/cysteine 613, cysteine 615/cysteine 625, cysteine 628/cysteine 631, cysteine 635/cysteine 682, cysteine 641/cysteine 661, cysteine 644/cysteine 657, and cysteine 690/cysteine 714. 2 N-linked (GlcNAc...) asparagine glycosylation sites follow: asparagine 654 and asparagine 705. The chain crosses the membrane as a helical span at residues 720–742 (AMTILLAVVGSILLIGMALLAIW). Residues 743–798 (KLLVTIHDRREFAKFQSERSRARYEMASNPLYRKPISTHTVDFAFNKFNKSYNGSV) are Cytoplasmic-facing. Residue serine 770 is modified to Phosphoserine.

This sequence belongs to the integrin beta chain family. Heterodimer of an alpha and a beta subunit. Beta-5 (ITGB5) associates with alpha-V (ITGAV). Interacts with MYO10. Interacts with DAB2. Integrin ITGAV:ITGB5 interacts with FBLN5 (via N-terminus). ITGAV:ITGB5 interacts with CCN3. Interacts with tensin TNS3; TNS3 also interacts with PEAK1, thus acting as an adapter molecule to bridge the association of PEAK1 with ITGB5.

The protein resides in the cell membrane. In terms of biological role, integrin alpha-V/beta-5 (ITGAV:ITGB5) is a receptor for fibronectin. It recognizes the sequence R-G-D in its ligand. The sequence is that of Integrin beta-5 (Itgb5) from Mus musculus (Mouse).